Reading from the N-terminus, the 492-residue chain is Membrane-bound lytic murein transglycosylase F (492 aa).

Residues 1–18 form the signal peptide; it reads MKGLFLRIIAIVALLLWA. The non-LT domain stretch occupies residues 19 to 268; it reads IDMVFPWQQI…RIEEKYFNHL (250 aa). An LT domain region spans residues 270 to 492; sequence QFDYVDTRSY…DTLATTVTTQ (223 aa). Glu313 is an active-site residue.

In the N-terminal section; belongs to the bacterial solute-binding protein 3 family. This sequence in the C-terminal section; belongs to the transglycosylase Slt family.

Its subcellular location is the cell outer membrane. It catalyses the reaction Exolytic cleavage of the (1-&gt;4)-beta-glycosidic linkage between N-acetylmuramic acid (MurNAc) and N-acetylglucosamine (GlcNAc) residues in peptidoglycan, from either the reducing or the non-reducing ends of the peptidoglycan chains, with concomitant formation of a 1,6-anhydrobond in the MurNAc residue.. Functionally, murein-degrading enzyme that degrades murein glycan strands and insoluble, high-molecular weight murein sacculi, with the concomitant formation of a 1,6-anhydromuramoyl product. Lytic transglycosylases (LTs) play an integral role in the metabolism of the peptidoglycan (PG) sacculus. Their lytic action creates space within the PG sacculus to allow for its expansion as well as for the insertion of various structures such as secretion systems and flagella. The polypeptide is Membrane-bound lytic murein transglycosylase F (Pasteurella multocida (strain Pm70)).